Consider the following 1032-residue polypeptide: MGRESRHYRKRSASRGRSGSRSRSRSPSDKRSKRGDDRRSRSRDRDRRRERSRSRDKRRSRSRDRKRLRRSRSRERDRSRERRRSRSRDRRRSRSRSRGRRSRSSSPGNKSKKTENRSRSKEKTDGGESSKEKKKDKDDKEDEKEKDAGNFDQNKLEEEMRKRKERVEKWREEQRKKAMENIGELKKEIEEMKQGKKWSLEDDDDDEDDPAEAEKEGNEMEGEELDPLDAYMEEVKEEVKKFNMRSVKGGGGNEKKSGPTVTKVVTVVTTKKAVVDSDKKKGELMENDQDAMEYSSEEEEVDLQTALTGYQTKQRKLLEPVDHGKIEYEPFRKNFYVEVPELAKMSQEEVNVFRLEMEGITVKGKGCPKPIKSWVQCGISMKILNSLKKHGYEKPTPIQTQAIPAIMSGRDLIGIAKTGSGKTIAFLLPMFRHIMDQRSLEEGEGPIAVIMTPTRELALQITKECKKFSKTLGLRVVCVYGGTGISEQIAELKRGAEIIVCTPGRMIDMLAANSGRVTNLRRVTYVVLDEADRMFDMGFEPQVMRIVDNVRPDRQTVMFSATFPRAMEALVRRILSKPIEVQVGGRSVVCSDVEQQVIVIEEEKKFLKLLELLGHYQESGSVIIFVDKQEHADGLLKDLMRASYPCMSLHGGIDQYDRDSIINDFKNGTCKLLVATSVAARGLDVKHLILVVNYSCPNHYEDYVHRAGRTGRAGNKGYAYTFITEDQARYAGDIIKALELSGTAVPPDLEKLWSDFKDQQKAEGKIIKKSSGFSGKGFKFDETEQALANERKKLQKAALGLQDSDDEDAAVDIDEQIESMFNSKKRVKDMAAPGTSSAPAPTAGNAEKLEIAKRLALRINAQKNLGIESQVDVMQQATNAILRGGTILAPTVSAKTIAEQLAEKINAKLNYVPLEKQEEERQDGGQNESFKRYEEELEINDFPQTARWKVTSKEALQRISEYSEAAITIRGTYFPPGKEPKEGERKIYLAIESANELAVQKAKAEITRLIKEELIRLQNSYQPTNKGRYKVL.

Over residues 1-24 the composition is skewed to basic residues; the sequence is MGRESRHYRKRSASRGRSGSRSRS. Residues 1-228 form a disordered region; the sequence is MGRESRHYRK…EMEGEELDPL (228 aa). A lipid anchor (N-myristoyl glycine) is attached at glycine 2. Over residues 26–49 the composition is skewed to basic and acidic residues; that stretch reads SPSDKRSKRGDDRRSRSRDRDRRR. 2 stretches are compositionally biased toward basic residues: residues 50–73 and 81–103; these read ERSRSRDKRRSRSRDRKRLRRSRS and ERRRSRSRDRRRSRSRSRGRRSR. Residues 112-200 are compositionally biased toward basic and acidic residues; the sequence is KKTENRSRSK…EMKQGKKWSL (89 aa). The stretch at 152–197 forms a coiled coil; it reads DQNKLEEEMRKRKERVEKWREEQRKKAMENIGELKKEIEEMKQGKK. A Glycyl lysine isopeptide (Lys-Gly) (interchain with G-Cter in SUMO2) cross-link involves residue lysine 186. Serine 199 bears the Phosphoserine mark. Acidic residues-rich tracts occupy residues 201–211 and 219–228; these read EDDDDDEDDPA and EMEGEELDPL. Lysine 263 bears the N6-acetyllysine mark. At tyrosine 294 the chain carries Phosphotyrosine. A phosphoserine mark is found at serine 295 and serine 296. Residue lysine 325 forms a Glycyl lysine isopeptide (Lys-Gly) (interchain with G-Cter in SUMO2) linkage. Serine 346 bears the Phosphoserine mark. The Q motif motif lies at 372 to 400; it reads KSWVQCGISMKILNSLKKHGYEKPTPIQT. Residues 403–581 form the Helicase ATP-binding domain; it reads IPAIMSGRDL…RRILSKPIEV (179 aa). 416 to 423 serves as a coordination point for ATP; the sequence is AKTGSGKT. The DEAD box motif lies at 529–532; sequence DEAD. The Helicase C-terminal domain occupies 592 to 753; the sequence is DVEQQVIVIE…AVPPDLEKLW (162 aa). Lysine 776 is modified (N6-acetyllysine). Lysine 779 participates in a covalent cross-link: Glycyl lysine isopeptide (Lys-Gly) (interchain with G-Cter in SUMO2). Serine 804 is modified (phosphoserine). At lysine 904 the chain carries N6-acetyllysine. Glycyl lysine isopeptide (Lys-Gly) (interchain with G-Cter in SUMO2) cross-links involve residues lysine 908 and lysine 916. Serine 929 bears the Phosphoserine mark.

The protein belongs to the DEAD box helicase family. DDX46/PRP5 subfamily. As to quaternary structure, component of the 17S U2 SnRNP complex, a ribonucleoprotein complex that contains small nuclear RNA (snRNA) U2 and a number of specific proteins. Within the 17S U2 SnRNP complex, DDX46 is part of the SF3B subcomplex, which is required for 'A' complex assembly formed by the stable binding of U2 snRNP to the branchpoint sequence in pre-mRNA. Recruited to the 17S U2 SnRNP complex following release of DDX42; DDX42 and DDX46 bind the SF3B subcomplex in a competitive manner.

Its subcellular location is the nucleus speckle. It localises to the nucleus. The protein localises to the cajal body. It catalyses the reaction ATP + H2O = ADP + phosphate + H(+). In terms of biological role, component of the 17S U2 SnRNP complex of the spliceosome, a large ribonucleoprotein complex that removes introns from transcribed pre-mRNAs. The 17S U2 SnRNP complex (1) directly participates in early spliceosome assembly and (2) mediates recognition of the intron branch site during pre-mRNA splicing by promoting the selection of the pre-mRNA branch-site adenosine, the nucleophile for the first step of splicing. Within the 17S U2 SnRNP complex, DDX46 plays essential roles during assembly of pre-spliceosome and proofreading of the branch site. This Pongo abelii (Sumatran orangutan) protein is Probable ATP-dependent RNA helicase DDX46 (DDX46).